A 299-amino-acid chain; its full sequence is Methionyl-tRNA formyltransferase (299 aa).

(6S)-5,6,7,8-tetrahydrofolate is bound at residue 109–112; that stretch reads SLLP.

The protein belongs to the Fmt family.

It carries out the reaction L-methionyl-tRNA(fMet) + (6R)-10-formyltetrahydrofolate = N-formyl-L-methionyl-tRNA(fMet) + (6S)-5,6,7,8-tetrahydrofolate + H(+). Attaches a formyl group to the free amino group of methionyl-tRNA(fMet). The formyl group appears to play a dual role in the initiator identity of N-formylmethionyl-tRNA by promoting its recognition by IF2 and preventing the misappropriation of this tRNA by the elongation apparatus. This Wolbachia pipientis subsp. Culex pipiens (strain wPip) protein is Methionyl-tRNA formyltransferase.